A 347-amino-acid chain; its full sequence is 3-methyl-2-oxobutanoate hydroxymethyltransferase 1, mitochondrial (347 aa).

The N-terminal 48 residues, 1 to 48 (MASSLTRNCSRFSKAISVRFMSNLPENTVYGGPKPQNPNQRVTLTHLR), are a transit peptide targeting the mitochondrion. Asp-83 and Asp-122 together coordinate Mg(2+). Residues 83–84 (DS), Asp-122, and Lys-152 contribute to the 3-methyl-2-oxobutanoate site. Position 154 (Glu-154) interacts with Mg(2+). The active-site Proton acceptor is Glu-222.

This sequence belongs to the PanB family. Mg(2+) is required as a cofactor.

The protein resides in the mitochondrion. It carries out the reaction 3-methyl-2-oxobutanoate + (6R)-5,10-methylene-5,6,7,8-tetrahydrofolate + H2O = 2-dehydropantoate + (6S)-5,6,7,8-tetrahydrofolate. It functions in the pathway cofactor biosynthesis; (R)-pantothenate biosynthesis; (R)-pantoate from 3-methyl-2-oxobutanoate: step 1/2. In terms of biological role, catalyzes the reversible reaction in which hydroxymethyl group from 5,10-methylenetetrahydrofolate is transferred onto alpha-ketoisovalerate to form ketopantoate. This Arabidopsis thaliana (Mouse-ear cress) protein is 3-methyl-2-oxobutanoate hydroxymethyltransferase 1, mitochondrial (KPHMT1).